The following is a 495-amino-acid chain: Glutamate--tRNA ligase (495 aa).

Positions 12 to 22 (PSPTGHLHIGN) match the 'HIGH' region motif. Positions 259-263 (KLSKR) match the 'KMSKS' region motif. Lys-262 provides a ligand contact to ATP.

It belongs to the class-I aminoacyl-tRNA synthetase family. Glutamate--tRNA ligase type 1 subfamily. In terms of assembly, monomer.

It localises to the cytoplasm. The catalysed reaction is tRNA(Glu) + L-glutamate + ATP = L-glutamyl-tRNA(Glu) + AMP + diphosphate. Functionally, catalyzes the attachment of glutamate to tRNA(Glu) in a two-step reaction: glutamate is first activated by ATP to form Glu-AMP and then transferred to the acceptor end of tRNA(Glu). The sequence is that of Glutamate--tRNA ligase from Ligilactobacillus salivarius (strain UCC118) (Lactobacillus salivarius).